Consider the following 76-residue polypeptide: Demidefensin-3 (76 aa).

The signal sequence occupies residues 1–22 (MRTLALHTAMLLLVALHAQAEA). Positions 23 to 64 (RQARADEAAAQQQPGADDQGMAHSFTWPENAALPLSESERGL) are excised as a propeptide. Residues 25–45 (ARADEAAAQQQPGADDQGMAH) form a disordered region. Over residues 30 to 44 (AAAQQQPGADDQGMA) the composition is skewed to low complexity. Cys-68 and Cys-73 are disulfide-bonded. Positions 74–76 (RLL) are excised as a propeptide.

Belongs to the alpha-defensin family. Theta subfamily. In terms of assembly, forms a cyclic homodimer; disulfide-linked. In terms of processing, this is a cyclic peptide.

Functionally, has antimicrobial activities against bacteria and fungi. This chain is Demidefensin-3, found in Macaca mulatta (Rhesus macaque).